Consider the following 343-residue polypeptide: Uroporphyrinogen decarboxylase (343 aa).

Residues 23–27 (RQAGR), aspartate 73, tyrosine 150, serine 205, and histidine 322 contribute to the substrate site.

The protein belongs to the uroporphyrinogen decarboxylase family. In terms of assembly, homodimer.

It is found in the cytoplasm. The enzyme catalyses uroporphyrinogen III + 4 H(+) = coproporphyrinogen III + 4 CO2. It participates in porphyrin-containing compound metabolism; protoporphyrin-IX biosynthesis; coproporphyrinogen-III from 5-aminolevulinate: step 4/4. Its function is as follows. Catalyzes the decarboxylation of four acetate groups of uroporphyrinogen-III to yield coproporphyrinogen-III. The protein is Uroporphyrinogen decarboxylase of Cereibacter sphaeroides (strain ATCC 17029 / ATH 2.4.9) (Rhodobacter sphaeroides).